The sequence spans 397 residues: Mannitol-1-phosphate 5-dehydrogenase (397 aa).

NAD(+) is bound at residue 9 to 20 (AVHFGAGNIGRG). K220 is an active-site residue.

This sequence belongs to the mannitol dehydrogenase family. Monomer.

The enzyme catalyses D-mannitol 1-phosphate + NAD(+) = beta-D-fructose 6-phosphate + NADH + H(+). Functionally, catalyzes the NAD(H)-dependent interconversion of D-fructose 6-phosphate and D-mannitol 1-phosphate in the mannitol metabolic pathway. This is Mannitol-1-phosphate 5-dehydrogenase from Podospora anserina (strain S / ATCC MYA-4624 / DSM 980 / FGSC 10383) (Pleurage anserina).